Consider the following 1174-residue polypeptide: PR domain zinc finger protein 15 (1174 aa).

Residues S75 to A185 form the SET domain. Residues L252 to V307 form a disordered region. Over residues A261 to R271 the composition is skewed to basic and acidic residues. Residues P292–A304 are compositionally biased toward basic residues. C2H2-type zinc fingers lie at residues H402–H424 and F434–H457. The segment at Y468–H486 adopts a C2H2-type 3; degenerate zinc-finger fold. 2 consecutive C2H2-type zinc fingers follow at residues F495–H517 and F522–H544. Residue K552 forms a Glycyl lysine isopeptide (Lys-Gly) (interchain with G-Cter in SUMO2) linkage. C2H2-type zinc fingers lie at residues S571–H593 and Y598–H620. A disordered region spans residues I639–P658. Over residues E644 to D655 the composition is skewed to acidic residues. 8 consecutive C2H2-type zinc fingers follow at residues Y661–H684, H689–H711, H725–H747, H753–H775, Y781–H803, Y809–H831, F837–H859, and W865–H888. Disordered stretches follow at residues A957–T1007 and L1147–Y1174. Residues G962 to Q973 are compositionally biased toward basic residues. The span at A1154–Y1174 shows a compositional bias: low complexity.

As to expression, expressed in embryonic stem cells (ESCs) (at protein level).

The protein localises to the nucleus. Its function is as follows. Sequence-specific DNA-binding transcriptional regulator. Plays a role as a molecular node in a transcriptional network regulating embryonic development and cell fate decision. Stimulates the expression of upstream key transcriptional activators and repressors of the Wnt/beta-catenin and MAPK/ERK pathways, respectively, that are essential for naive pluripotency and self-renewal maintenance of embryonic stem cells (ESCs). Specifically promotes SPRY1 and RSPO1 transcription activation through recognition and direct binding of a specific DNA sequence in their promoter regions. Also plays a role in induced pluripotent stem cells (iPSCs) reprogramming. Involved in early embryo development. The chain is PR domain zinc finger protein 15 from Mus musculus (Mouse).